Here is a 353-residue protein sequence, read N- to C-terminus: Outer membrane protein P5 (353 aa).

Residues 1–21 form the signal peptide; that stretch reads MKKTAIALVVAGLAAASVAQA. 8 consecutive transmembrane segments (beta stranded) span residues 27–37, 58–69, 77–85, 104–115, 120–128, 158–167, 172–179, and 205–213; these read TFYAGVKAGQA, SFTYGVFGGYQI, LAVELGYDD, HGTHLSLKGSYE, LDVYGKAGV, GLFAVGAEYA, LAVRLEYQ, and SINAGISYR. Positions 227–353 constitute an OmpA-like domain; the sequence is VVSKTFSLNS…RVEIAVNGTK (127 aa). C326 and C338 form a disulfide bridge.

This sequence belongs to the outer membrane OOP (TC 1.B.6) superfamily. OmpA family. As to quaternary structure, monomer and homodimer.

It localises to the cell outer membrane. Functionally, with TolR probably plays a role in maintaining the position of the peptidoglycan cell wall in the periplasm. Acts as a porin with low permeability that allows slow penetration of small solutes; an internal gate slows down solute passage. In terms of biological role, reconstitution in planar bilayers with lithium dodecyl sulfate-solublized P5 yields narrow pores (58 pS conductance) with a low probability of opening, whereas n-octyl-bD-glucopyranoside-solubilized P5 forms large pores (1.1 nS conductance) with high open probability. The large pore easily converts to the smaller pore at room temperature; at 42 degrees Celsius the smaller pore converts to the larger one. This Haemophilus influenzae (strain ATCC 51907 / DSM 11121 / KW20 / Rd) protein is Outer membrane protein P5.